Reading from the N-terminus, the 309-residue chain is Nucleoside kinase (309 aa).

Substrate-binding residues include Asp16, Gly42, and Asn46. An ATP-binding site is contributed by Gln108. Substrate is bound by residues 110 to 112 (SYF) and Gln166. Residues Asn189 and 217-223 (KTYGKEG) each bind ATP. Asp249 contributes to the substrate binding site. Asp249 serves as the catalytic Proton acceptor.

It belongs to the carbohydrate kinase PfkB family. As to quaternary structure, homodimer. Mg(2+) serves as cofactor.

Catalyzes the phosphorylation of a wide range of nucleosides to yield nucleoside monophosphates, using ATP, ITP or GTP as phosphate donor. In Methanothermobacter thermautotrophicus (strain ATCC 29096 / DSM 1053 / JCM 10044 / NBRC 100330 / Delta H) (Methanobacterium thermoautotrophicum), this protein is Nucleoside kinase.